Consider the following 171-residue polypeptide: S-ribosylhomocysteine lyase (171 aa).

Fe cation contacts are provided by His54, His58, and Cys128.

Belongs to the LuxS family. In terms of assembly, homodimer. Fe cation serves as cofactor.

The catalysed reaction is S-(5-deoxy-D-ribos-5-yl)-L-homocysteine = (S)-4,5-dihydroxypentane-2,3-dione + L-homocysteine. Involved in the synthesis of autoinducer 2 (AI-2) which is secreted by bacteria and is used to communicate both the cell density and the metabolic potential of the environment. The regulation of gene expression in response to changes in cell density is called quorum sensing. Catalyzes the transformation of S-ribosylhomocysteine (RHC) to homocysteine (HC) and 4,5-dihydroxy-2,3-pentadione (DPD). The chain is S-ribosylhomocysteine lyase from Pectobacterium carotovorum subsp. carotovorum (strain PC1).